A 311-amino-acid polypeptide reads, in one-letter code: Cytochrome f (311 aa).

The N-terminal stretch at 1–27 is a signal peptide; that stretch reads MRRHLSLVLGSLVIGLALLIAPGASWA. Tyr28, Cys48, Cys51, and His52 together coordinate heme. Residues 277-297 form a helical membrane-spanning segment; that stretch reads IYGLLAFFAAVAIAQIMLVLK.

This sequence belongs to the cytochrome f family. In terms of assembly, the 4 large subunits of the cytochrome b6-f complex are cytochrome b6, subunit IV (17 kDa polypeptide, PetD), cytochrome f and the Rieske protein, while the 4 small subunits are PetG, PetL, PetM and PetN. The complex functions as a dimer. Requires heme as cofactor.

It localises to the cellular thylakoid membrane. Functionally, component of the cytochrome b6-f complex, which mediates electron transfer between photosystem II (PSII) and photosystem I (PSI), cyclic electron flow around PSI, and state transitions. In Synechococcus sp. (strain CC9902), this protein is Cytochrome f.